The sequence spans 336 residues: MPTDNDLKTSIVELLHDLDALLVAHFYQKDEIVELAHHTGDSLELAKIASQSDKNLIVFCGVHFMGESVKALAFEKQVIMPKLSCCSMARMIDSHYYDRSVHLLKECGVKEFYPITYINSNAEVKAKVAKDGGVVCTSRNASKIFNHALKQNKKIFFLPDKCLGENLALENGLKSAILGVNSPEEIKNADVVCYNGFCSVHQLFKLEDIEFYRQKYPDILIAVHPECEPSVVSNADFSGSTSQIIEFVEKLSPNQKVAIGTESHLVNRLKAKRHHQNTFILSSTLAFCPTMNETTLKDLFEVLKAYKNHRAYNAVELKDEVAHWAKLALTKMMELS.

Residues histidine 25 and serine 42 each contribute to the iminosuccinate site. Cysteine 86 serves as a coordination point for [4Fe-4S] cluster. Residues 117-119 (YIN) and serine 138 contribute to the iminosuccinate site. Position 198 (cysteine 198) interacts with [4Fe-4S] cluster. Residues 224 to 226 (HPE) and threonine 241 contribute to the iminosuccinate site. Cysteine 288 contacts [4Fe-4S] cluster.

Belongs to the quinolinate synthase family. Type 3 subfamily. [4Fe-4S] cluster is required as a cofactor.

It localises to the cytoplasm. It catalyses the reaction iminosuccinate + dihydroxyacetone phosphate = quinolinate + phosphate + 2 H2O + H(+). It participates in cofactor biosynthesis; NAD(+) biosynthesis; quinolinate from iminoaspartate: step 1/1. Catalyzes the condensation of iminoaspartate with dihydroxyacetone phosphate to form quinolinate. In Helicobacter pylori (strain HPAG1), this protein is Quinolinate synthase.